Here is a 300-residue protein sequence, read N- to C-terminus: Transcription factor DUO1 (300 aa).

HTH myb-type domains lie at 8–64 (KEEI…RPNL) and 65–116 (KNGC…KRLA). DNA-binding regions (H-T-H motif) lie at residues 36-60 (WSSI…VNKL) and 89-112 (WARI…SSRQ). A compositionally biased stretch (low complexity) spans 123–135 (SDASSSSFNPKSS). A disordered region spans residues 123–145 (SDASSSSFNPKSSSSHRLKGKNV). The segment covering 136 to 145 (SSHRLKGKNV) has biased composition (basic residues).

As to expression, confined to inflorescences, especially in stamens and pollen.

The protein localises to the nucleus. In terms of biological role, transcription activator that acts as a positive regulator of male germline development by promoting both gametic cell specification and cell cycle progression. Binds to canonical MYB sites 5'-AACCGTC-3', 5'-AAACCGC-3' and 5'-AACCGT-3' in promoters to trigger the expression of male germline-specific or enriched genes (e.g. MGH3, GEX2 and GCS1), including those required for fertilization. Required for sperm cell specification leading to pollen maturation by activating a germline-specific regulon. Involved in pollen mitosis entry at G2-M transition via the regulation of CYCB1-1, DAZ1 and DAZ2 expression. The protein is Transcription factor DUO1 of Arabidopsis thaliana (Mouse-ear cress).